The primary structure comprises 89 residues: Small ribosomal subunit protein uS15 (89 aa).

The protein belongs to the universal ribosomal protein uS15 family. In terms of assembly, part of the 30S ribosomal subunit. Forms a bridge to the 50S subunit in the 70S ribosome, contacting the 23S rRNA.

In terms of biological role, one of the primary rRNA binding proteins, it binds directly to 16S rRNA where it helps nucleate assembly of the platform of the 30S subunit by binding and bridging several RNA helices of the 16S rRNA. Its function is as follows. Forms an intersubunit bridge (bridge B4) with the 23S rRNA of the 50S subunit in the ribosome. The sequence is that of Small ribosomal subunit protein uS15 from Klebsiella pneumoniae (strain 342).